The primary structure comprises 159 residues: Dihydrofolate reductase (159 aa).

The 158-residue stretch at methionine 1–arginine 158 folds into the DHFR domain. Position 5 (isoleucine 5) interacts with substrate. NADP(+) is bound by residues alanine 7 and valine 13–alanine 19. Aspartate 27 is a substrate binding site. An NADP(+)-binding site is contributed by histidine 45–threonine 46. 2 residues coordinate substrate: arginine 52 and arginine 57. NADP(+)-binding positions include serine 63–serine 64, lysine 76, and glycine 95–glutamine 102. Threonine 113 contributes to the substrate binding site.

It belongs to the dihydrofolate reductase family.

It carries out the reaction (6S)-5,6,7,8-tetrahydrofolate + NADP(+) = 7,8-dihydrofolate + NADPH + H(+). Its pathway is cofactor biosynthesis; tetrahydrofolate biosynthesis; 5,6,7,8-tetrahydrofolate from 7,8-dihydrofolate: step 1/1. Functionally, key enzyme in folate metabolism. Catalyzes an essential reaction for de novo glycine and purine synthesis, and for DNA precursor synthesis. The sequence is that of Dihydrofolate reductase (folA) from Escherichia coli O6:H1 (strain CFT073 / ATCC 700928 / UPEC).